The primary structure comprises 371 residues: Protein SOMBRERO (371 aa).

The NAC domain maps to 17-166; sequence VPPGFRFHPT…GWVVCRVFKK (150 aa). Residues 118-172 mediate DNA binding; that stretch reads IGLRKTLVFYTGRAPHGQKTEWIMHEYRLDDSENEIQEDGWVVCRVFKKKNHFRG. 2 disordered regions span residues 176–213 and 316–355; these read EQEQ…LILH and VQNH…NQRF. Positions 192 to 201 are enriched in basic and acidic residues; the sequence is NDHDHHHHID. 2 stretches are compositionally biased toward low complexity: residues 202–213 and 340–349; these read SNSNNHSPLILH and GNNNGGSSSS.

As to expression, accumulates in maturing root cap cells, in both COL and LRC cells.

The protein localises to the nucleus. Functionally, transcription regulator. Together with BRN1 and BRN2, regulates cellular maturation of root cap. Represses stem cell-like divisions in the root cap daughter cells, and thus promotes daughter cell fate. Inhibits expression of its positive regulator FEZ in a feedback loop for controlled switches in cell division plane. Promotes the expression of genes involved in secondary cell walls (SCW) biosynthesis. The sequence is that of Protein SOMBRERO (SMB) from Arabidopsis thaliana (Mouse-ear cress).